The primary structure comprises 137 residues: Outer membrane protein assembly factor BamE (137 aa).

The signal sequence occupies residues 1–18 (MQVKTLLGATFLALSLAS). The N-palmitoyl cysteine moiety is linked to residue Cys-19. Cys-19 carries S-diacylglycerol cysteine lipidation.

Belongs to the BamE family. Part of the Bam complex.

It is found in the cell outer membrane. Functionally, part of the outer membrane protein assembly complex, which is involved in assembly and insertion of beta-barrel proteins into the outer membrane. The polypeptide is Outer membrane protein assembly factor BamE (Haemophilus influenzae (strain ATCC 51907 / DSM 11121 / KW20 / Rd)).